The sequence spans 686 residues: Amyloid-beta-like protein (686 aa).

Residues 1-21 (MTVGKLMIGLLIPILVATVYA) form the signal peptide. Over 22–621 (EGSPAGSKRH…VERSASSVFQ (600 aa)) the chain is Extracellular. Positions 32-125 (EKFIPMVAFS…PYHCIDGEFH (94 aa)) are GFLD subdomain. The 166-residue stretch at 32–197 (EKFIPMVAFS…TGVEFVCCPN (166 aa)) folds into the E1 domain. Disulfide bonds link Cys42-Cys65, Cys76-Cys119, Cys101-Cys108, Cys135-Cys195, Cys146-Cys182, and Cys160-Cys194. An N-linked (GlcNAc...) asparagine glycan is attached at Asn84. The cuBD subdomain stretch occupies residues 133–197 (HDCQFSHVNS…TGVEFVCCPN (65 aa)). Residue Asn201 is glycosylated (N-linked (GlcNAc...) asparagine). The disordered stretch occupies residues 201–245 (NKTDVQKTKEDEDDDDDEDDAYEDDYSEESDEKDEEEPSSQDPYF). The span at 211-239 (DEDDDDDEDDAYEDDYSEESDEKDEEEPS) shows a compositional bias: acidic residues. Residues 240 to 440 (SQDPYFKIAN…KYVRPIAVTY (201 aa)) form the E2 domain. Asn249 carries N-linked (GlcNAc...) asparagine glycosylation. Heparin is bound by residues 252–255 (NEHD) and His382. An N-linked (GlcNAc...) asparagine glycan is attached at Asn417. 2 disordered regions span residues 479–526 (PTTT…DMKK) and 550–585 (KLVE…NIKE). Residues 500–516 (SDSEEEADEYYEDEDDE) show a composition bias toward acidic residues. Basic and acidic residues predominate over residues 517 to 526 (QVKKTPDMKK). The segment covering 558–567 (TDDEDDDEDS) has biased composition (acidic residues). The helical transmembrane segment at 622-642 (PYVLASAMFITAICIIAFAIT) threads the bilayer. At 643–686 (NARRRRAMRGFIEVDVYTPEERHVAGMQVNGYENPTYSFFDSKA) the chain is on the cytoplasmic side. The YENPXY motif signature appears at 674–679 (YENPTY).

This sequence belongs to the APP family. Interacts (via cytoplasmic domain) with feh-1 (via PID 2 domain). Extracellular region is proteolytically cleaved. Expressed in the head, pharynx, spermatheca, uterus, vulva, tail and ventral neurons. Specifically expressed in nerve ring interneurons, the ventral cord, socket and amphids in the head, with strong expression in junctional cells, including the pharyngeal intestinal valve and uterine seam junction, and the excretory cell and weak expression in epidermal epithelial cells, including hyp7 cells, vulval cells, rectal valve cells, pharyngeal arcade cells and the tail hypodermis.

The protein resides in the membrane. It localises to the early endosome. Functionally, required for normal developmental progression throughout all life stages. Specifically required for the molt stage during all larval transitions and morphogenesis. Acts with heterochronic genes, including members of the let-7 family, to regulate larval stage to adult transition. Acts synergistically with acn-1 in let-7 regulated postembryonic cell division of hypodermal seam cells. Acts in multiple pathways to influence daf-12 and daf-16 activity to in turn regulate physiological and reproductive processes such as body size and egg-laying. May play a role in neurotransmission. This Caenorhabditis elegans protein is Amyloid-beta-like protein.